We begin with the raw amino-acid sequence, 533 residues long: Lysine--tRNA ligase (533 aa).

A 'HIGH' region motif is present at residues 28-36; the sequence is PSGHIHIGN. The 'KMSKS' region motif lies at 278-282; it reads PMSSS.

The protein belongs to the class-I aminoacyl-tRNA synthetase family.

It localises to the cytoplasm. It catalyses the reaction tRNA(Lys) + L-lysine + ATP = L-lysyl-tRNA(Lys) + AMP + diphosphate. The sequence is that of Lysine--tRNA ligase (lysS) from Methanococcus maripaludis (strain DSM 14266 / JCM 13030 / NBRC 101832 / S2 / LL).